Reading from the N-terminus, the 335-residue chain is ATP-dependent 6-phosphofructokinase (335 aa).

Gly-11 provides a ligand contact to ATP. ADP is bound at residue 21 to 25 (RAVVR). ATP contacts are provided by residues 72-73 (RY) and 102-105 (GDGS). Asp-103 serves as a coordination point for Mg(2+). Residue 125-127 (TID) coordinates substrate. Asp-127 (proton acceptor) is an active-site residue. Arg-154 serves as a coordination point for ADP. Substrate-binding positions include Arg-162 and 169–171 (MGR). ADP-binding positions include 185–187 (GAD) and 213–215 (KKH). Substrate is bound by residues Glu-222, Arg-244, and 250-253 (HIQR).

Belongs to the phosphofructokinase type A (PFKA) family. ATP-dependent PFK group I subfamily. Prokaryotic clade 'B1' sub-subfamily. In terms of assembly, homotetramer. The cofactor is Mg(2+).

Its subcellular location is the cytoplasm. The catalysed reaction is beta-D-fructose 6-phosphate + ATP = beta-D-fructose 1,6-bisphosphate + ADP + H(+). The protein operates within carbohydrate degradation; glycolysis; D-glyceraldehyde 3-phosphate and glycerone phosphate from D-glucose: step 3/4. Its activity is regulated as follows. Allosterically activated by ADP and other diphosphonucleosides, and allosterically inhibited by phosphoenolpyruvate. Its function is as follows. Catalyzes the phosphorylation of D-fructose 6-phosphate to fructose 1,6-bisphosphate by ATP, the first committing step of glycolysis. The chain is ATP-dependent 6-phosphofructokinase from Streptococcus pneumoniae serotype 19F (strain G54).